The sequence spans 206 residues: Small ribosomal subunit protein uS4 (206 aa).

One can recognise an S4 RNA-binding domain in the interval 96-156 (GRLDNVVYRM…EKSKKQARIK (61 aa)).

This sequence belongs to the universal ribosomal protein uS4 family. In terms of assembly, part of the 30S ribosomal subunit. Contacts protein S5. The interaction surface between S4 and S5 is involved in control of translational fidelity.

Functionally, one of the primary rRNA binding proteins, it binds directly to 16S rRNA where it nucleates assembly of the body of the 30S subunit. Its function is as follows. With S5 and S12 plays an important role in translational accuracy. In Haemophilus influenzae (strain ATCC 51907 / DSM 11121 / KW20 / Rd), this protein is Small ribosomal subunit protein uS4.